Here is a 522-residue protein sequence, read N- to C-terminus: Pectinesterase/pectinesterase inhibitor PPE8B (522 aa).

Positions 1-30 (MPYLLMASHNPLPAGKQLLLLVLLCAFFSS) are cleaved as a signal peptide. The pectinesterase inhibitor PPE8B stretch occupies residues 31-174 (SFIPFASCSI…TSLVQELLTQ (144 aa)). 6 N-linked (GlcNAc...) asparagine glycosylation sites follow: N105, N118, N119, N218, N221, and N274. A pectinesterase PPE8B region spans residues 208 to 506 (DAIVAQDGTG…YTVAQFIEGN (299 aa)). Substrate contacts are provided by T283 and Q313. D336 acts as the Proton donor; for pectinesterase activity in catalysis. Residues C350 and C370 are joined by a disulfide bond. The active-site Nucleophile; for pectinesterase activity is the D357. N-linked (GlcNAc...) asparagine glycosylation is present at N405. Substrate contacts are provided by R426 and W428. 2 N-linked (GlcNAc...) asparagine glycosylation sites follow: N489 and N496.

In the N-terminal section; belongs to the PMEI family. The protein in the C-terminal section; belongs to the pectinesterase family.

The protein localises to the secreted. It localises to the cell wall. The enzyme catalyses [(1-&gt;4)-alpha-D-galacturonosyl methyl ester](n) + n H2O = [(1-&gt;4)-alpha-D-galacturonosyl](n) + n methanol + n H(+). It participates in glycan metabolism; pectin degradation; 2-dehydro-3-deoxy-D-gluconate from pectin: step 1/5. Its function is as follows. May have roles in the deposition of pectin in developing tissues and in the wall loosening and cell separation that occurs in cell expansion, fruit ripening and abscission. The protein is Pectinesterase/pectinesterase inhibitor PPE8B of Prunus persica (Peach).